The chain runs to 361 residues: Tyrosine--tRNA ligase (361 aa).

The L-tyrosine site is built by Tyr-36, Tyr-162, Gln-166, Asp-169, and Gln-184. The short motif at 235–239 (KMSKS) is the 'KMSKS' region element. Lys-238 is an ATP binding site.

This sequence belongs to the class-I aminoacyl-tRNA synthetase family. TyrS type 4 subfamily. As to quaternary structure, homodimer.

It is found in the cytoplasm. It carries out the reaction tRNA(Tyr) + L-tyrosine + ATP = L-tyrosyl-tRNA(Tyr) + AMP + diphosphate + H(+). Functionally, catalyzes the attachment of tyrosine to tRNA(Tyr) in a two-step reaction: tyrosine is first activated by ATP to form Tyr-AMP and then transferred to the acceptor end of tRNA(Tyr). This Sulfolobus acidocaldarius (strain ATCC 33909 / DSM 639 / JCM 8929 / NBRC 15157 / NCIMB 11770) protein is Tyrosine--tRNA ligase.